Consider the following 137-residue polypeptide: Phosphomevalonate dehydratase small subunit (137 aa).

The active-site Proton acceptor is the serine 62.

Belongs to the AcnX type II small subunit family. As to quaternary structure, heterodimer composed of a large subunit (PMDh-L) and a small subunit (PMDh-S).

It carries out the reaction (R)-5-phosphomevalonate = (2E)-3-methyl-5-phosphooxypent-2-enoate + H2O. It participates in isoprenoid biosynthesis; isopentenyl diphosphate biosynthesis via mevalonate pathway. In terms of biological role, component of a hydro-lyase that catalyzes the dehydration of mevalonate 5-phosphate (MVA5P) to form trans-anhydromevalonate 5-phosphate (tAHMP). Involved in the archaeal mevalonate (MVA) pathway, which provides fundamental precursors for isoprenoid biosynthesis, such as isopentenyl diphosphate (IPP) and dimethylallyl diphosphate (DMAPP). The chain is Phosphomevalonate dehydratase small subunit from Methanothrix thermoacetophila (strain DSM 6194 / JCM 14653 / NBRC 101360 / PT) (Methanosaeta thermophila).